The sequence spans 176 residues: MWVLALGGAFLAVAKACIFCRLQDHALANRLAQLNNQTKPKWKWKEWASPDFSAFALDEVSMKQVTEKTHRVLRVIEKKGSTSLIPLYWQWLQKTRIPQYTREALCAPVCRGSTILYNCSTCEGKEESCWPQKHCYPDSHDLWDARILLLCIFGIVLLSGVVSLQVEYLNLQAKDL.

A signal peptide spans 1 to 16; it reads MWVLALGGAFLAVAKA. Disulfide bonds link cysteine 17–cysteine 119, cysteine 20–cysteine 122, cysteine 106–cysteine 129, and cysteine 110–cysteine 135. Residues 17–146 are Extracellular-facing; it reads CIFCRLQDHA…PDSHDLWDAR (130 aa). Residues asparagine 36 and asparagine 118 are each glycosylated (N-linked (GlcNAc...) asparagine). The helical transmembrane segment at 147–167 threads the bilayer; it reads ILLLCIFGIVLLSGVVSLQVE. Residues 168–176 are Cytoplasmic-facing; it reads YLNLQAKDL.

This sequence belongs to the TMEM95 family. As to quaternary structure, does not interact with sperm-egg fusion proteins IZUMO1 or IZUMO1R/JUNO. N-glycosylated. In terms of tissue distribution, expressed exclusively in testis.

The protein localises to the cytoplasmic vesicle. It localises to the secretory vesicle. Its subcellular location is the acrosome membrane. In terms of biological role, sperm protein required for fusion of sperm with the egg membrane during fertilization. The polypeptide is Sperm-egg fusion protein TMEM95 (Mus musculus (Mouse)).